A 235-amino-acid chain; its full sequence is Probable tetraspanin tspA (235 aa).

Residues 1-18 lie on the Cytoplasmic side of the membrane; it reads MVDTSNLLPQTPRLLKVP. Residues 19 to 39 form a helical membrane-spanning segment; the sequence is LIILNIILWILGLVLVIVGGI. The Extracellular portion of the chain corresponds to 40–68; that stretch reads CVSFLSNFKDFTKASDAKSALSNLTTSIP. N-linked (GlcNAc...) asparagine glycosylation occurs at asparagine 62. A helical membrane pass occupies residues 69–89; it reads AGVLVIGILFVIFTVVGCFVA. The Cytoplasmic segment spans residues 90 to 93; it reads YKEK. The helical transmembrane segment at 94-114 threads the bilayer; sequence LVGLVIYCAVMLILLVILIGV. The Extracellular segment spans residues 115-200; that stretch reads GGKAITLHND…FSSKIYAVGA (86 aa). N-linked (GlcNAc...) asparagine glycans are attached at residues asparagine 139, asparagine 143, and asparagine 160. Residues 201-221 traverse the membrane as a helical segment; sequence AGLAIGIIELVAILFSLFLII. At 222–235 the chain is on the cytoplasmic side; sequence RICRSPRTRSYDQY.

It belongs to the tetraspanin (TM4SF) family.

The protein localises to the membrane. The chain is Probable tetraspanin tspA (tspA) from Dictyostelium discoideum (Social amoeba).